Reading from the N-terminus, the 320-residue chain is Epoxidase atD (320 aa).

Asparagine 245 and asparagine 299 each carry an N-linked (GlcNAc...) asparagine glycan.

It participates in secondary metabolite biosynthesis. Functionally, epoxidase; part of the gene cluster that mediates the biosynthesis of terreic acid, a quinone epoxide inhibitor of Bruton's tyrosine kinase. The first step of the pathway is the synthesis of 6-methylsalicylic acid (6-MSA) by the 6-methylsalicylic acid synthase atX. In the biosynthesis of 6-MSA, atX utilizes one acetyl-CoA and three malonyl-CoAs as its substrates and catalyzes a series of programmed reactions including Claisen condensation, reduction, aldol cyclization, and the hydrolytic cleavage that yields 6-MSA. The 6-methylsalicylate 1-monooxygenase atA then catalyzes the decarboxylative hydroxylation of 6-MSA to 3-methylcatechol. The next step is the conversion of 3-methylcatechol to 3-methyl-1,2,4-benzenetriol by cytochrome P450 monooxygenase atE, which is enhanced by cytochrome P450 monooxygenase atG. Then, the epoxidase atD catalyzes the epoxidation and hydroxyl oxidation of 3-methyl-1,2,4-benzenetriol to terremutin. Lastly, GMC oxidoreductase atC oxidizes terremutin to terreic acid. This chain is Epoxidase atD, found in Aspergillus terreus (strain NIH 2624 / FGSC A1156).